We begin with the raw amino-acid sequence, 394 residues long: Elongation factor Tu 2 (394 aa).

The tr-type G domain occupies lysine 10–glutamate 204. The interval glycine 19–threonine 26 is G1. Glycine 19–threonine 26 lines the GTP pocket. Threonine 26 lines the Mg(2+) pocket. The G2 stretch occupies residues glycine 60 to asparagine 64. The segment at aspartate 81–glycine 84 is G3. GTP-binding positions include aspartate 81–histidine 85 and asparagine 136–aspartate 139. The segment at asparagine 136–aspartate 139 is G4. The interval serine 174–leucine 176 is G5.

It belongs to the TRAFAC class translation factor GTPase superfamily. Classic translation factor GTPase family. EF-Tu/EF-1A subfamily. As to quaternary structure, monomer.

It localises to the cytoplasm. The enzyme catalyses GTP + H2O = GDP + phosphate + H(+). Its function is as follows. GTP hydrolase that promotes the GTP-dependent binding of aminoacyl-tRNA to the A-site of ribosomes during protein biosynthesis. This is Elongation factor Tu 2 from Shewanella sp. (strain MR-4).